Reading from the N-terminus, the 119-residue chain is Gas vesicle protein O1 (119 aa).

The segment covering 1–12 (MADPANDRSERE) has biased composition (basic and acidic residues). Residues 1-48 (MADPANDRSEREEGGEDDETPPASDGNPSPSANSFTLSNAQTRAREAA) form a disordered region. The span at 26–42 (GNPSPSANSFTLSNAQT) shows a compositional bias: polar residues.

The protein belongs to the gas vesicle GvpO family. As to quaternary structure, forms homodimers, forms a GvpN1-GvpO1 heterodimer, interacts with GvpC1 (via the latter's C-terminus), GvpF1, GvpI1 and GvpL1, might interact with GvpA1.

It localises to the gas vesicle. It is found in the cytoplasm. Functionally, a minor component of the gas vesicle, also found in soluble extracts. May play a role in transcription and/or RNA stability and in GV assembly. Gas vesicles are hollow, gas filled proteinaceous nanostructures found in several microbial planktonic microorganisms. They allow positioning of halobacteria at the optimal depth for growth in the poorly aerated, shallow brine pools of their habitat. Expression of a 9.5 kb p-vac DNA fragment containing 2 divergently transcribed regions (gvpD-gvpE-gvpF-gvpG-gvpH-gvpI-gvpJ-gvpK-gvpL-gvpM and gvpA-gvpC-gvpN-gvpO) allows H.volcanii to produce gas vesicles. A minimal gas vesicle can be made in H.volcanii by gvpA1-gvpO1 gvpF1-gvpG1-gvpJ1-gvpK1-gvpL1-gvpM1; lack of enough GvpJ1 prevents formation. The same region restores gas vesicle production in H.halobium without the p-vac locus, but it still has the c-vac locus. This Halobacterium salinarum (strain ATCC 700922 / JCM 11081 / NRC-1) (Halobacterium halobium) protein is Gas vesicle protein O1.